The primary structure comprises 108 residues: Curli assembly protein CsgC (108 aa).

Positions 1–8 are cleaved as a signal peptide; it reads MHTLLLLA.

The protein belongs to the CsgC/AgfC family.

Its subcellular location is the periplasm. Its function is as follows. Plays a role in the extracellular assembly of CsgA into thin aggregative fimbriae (Tafi) fibers. Assembly may also require CsgE. Tafi are thought to be assembled via an extracellular nucleation-precipitation (ENP) pathway, and possibly also via an intracellular non-CsgC-dependent pathway. This is Curli assembly protein CsgC from Salmonella arizonae (strain ATCC BAA-731 / CDC346-86 / RSK2980).